The sequence spans 241 residues: Probable transcriptional regulatory protein lin1570 (241 aa).

A compositionally biased stretch (polar residues) spans 1–14; the sequence is MAGHSKWNNIQGRK. Positions 1–22 are disordered; the sequence is MAGHSKWNNIQGRKNAQDSKRS.

It belongs to the TACO1 family.

The protein localises to the cytoplasm. This chain is Probable transcriptional regulatory protein lin1570, found in Listeria innocua serovar 6a (strain ATCC BAA-680 / CLIP 11262).